An 842-amino-acid polypeptide reads, in one-letter code: Protein translocase subunit SecA (842 aa).

ATP contacts are provided by residues Q85, 103–107 (GEGKT), and D493. Residues C825, C827, C836, and H837 each contribute to the Zn(2+) site.

It belongs to the SecA family. Monomer and homodimer. Part of the essential Sec protein translocation apparatus which comprises SecA, SecYEG and auxiliary proteins SecDF. Other proteins may also be involved. It depends on Zn(2+) as a cofactor.

It is found in the cell membrane. Its subcellular location is the cytoplasm. It catalyses the reaction ATP + H2O + cellular proteinSide 1 = ADP + phosphate + cellular proteinSide 2.. In terms of biological role, part of the Sec protein translocase complex. Interacts with the SecYEG preprotein conducting channel. Has a central role in coupling the hydrolysis of ATP to the transfer of proteins into and across the cell membrane, serving as an ATP-driven molecular motor driving the stepwise translocation of polypeptide chains across the membrane. This chain is Protein translocase subunit SecA, found in Streptococcus equi subsp. equi (strain 4047).